Here is a 115-residue protein sequence, read N- to C-terminus: Nucleoid-associated protein Rpic_1036 (115 aa).

It belongs to the YbaB/EbfC family. As to quaternary structure, homodimer.

It localises to the cytoplasm. It is found in the nucleoid. Functionally, binds to DNA and alters its conformation. May be involved in regulation of gene expression, nucleoid organization and DNA protection. This Ralstonia pickettii (strain 12J) protein is Nucleoid-associated protein Rpic_1036.